The chain runs to 214 residues: MSTLHKVKAYFGMAPMDDYEDEYYDDRAPSRGFPRPRFDDGYGRYDGDDYDDPRREPADCPPPAGYRGGYAEESRYGAVHPREFERPEMGRPRFGSWLRNSTRGALAMDPRRMAMMFEEGHPLSKITTLRPKDYSEARTIGERFRDGTPVIMDLVSMDNADAKRLVDFAAGLAFALRGSFDKVATKVFLLSPADVDVSPEERRRIAETGFYAYQ.

A disordered region spans residues 23–70; that stretch reads YYDDRAPSRGFPRPRFDDGYGRYDGDDYDDPRREPADCPPPAGYRGGY. Basic and acidic residues predominate over residues 36 to 58; the sequence is PRFDDGYGRYDGDDYDDPRREPA.

It belongs to the SepF family. Homodimer. Interacts with FtsZ.

It localises to the cytoplasm. Functionally, cell division protein that is part of the divisome complex and is recruited early to the Z-ring. Probably stimulates Z-ring formation, perhaps through the cross-linking of FtsZ protofilaments. Its function overlaps with FtsA. The polypeptide is Cell division protein SepF (Mycolicibacterium paratuberculosis (strain ATCC BAA-968 / K-10) (Mycobacterium paratuberculosis)).